Reading from the N-terminus, the 130-residue chain is ATP synthase epsilon chain (130 aa).

The protein belongs to the ATPase epsilon chain family. F-type ATPases have 2 components, CF(1) - the catalytic core - and CF(0) - the membrane proton channel. CF(1) has five subunits: alpha(3), beta(3), gamma(1), delta(1), epsilon(1). CF(0) has three main subunits: a, b and c.

It is found in the cell inner membrane. Produces ATP from ADP in the presence of a proton gradient across the membrane. In Pelagibacter ubique (strain HTCC1062), this protein is ATP synthase epsilon chain.